A 438-amino-acid chain; its full sequence is UDP-N-acetylmuramoylalanine--D-glutamate ligase (438 aa).

112–118 (GSNGKST) is an ATP binding site.

It belongs to the MurCDEF family.

The protein resides in the cytoplasm. The catalysed reaction is UDP-N-acetyl-alpha-D-muramoyl-L-alanine + D-glutamate + ATP = UDP-N-acetyl-alpha-D-muramoyl-L-alanyl-D-glutamate + ADP + phosphate + H(+). Its pathway is cell wall biogenesis; peptidoglycan biosynthesis. Its function is as follows. Cell wall formation. Catalyzes the addition of glutamate to the nucleotide precursor UDP-N-acetylmuramoyl-L-alanine (UMA). In Salmonella choleraesuis (strain SC-B67), this protein is UDP-N-acetylmuramoylalanine--D-glutamate ligase.